We begin with the raw amino-acid sequence, 876 residues long: MSKSTAEIRQAFLDFFHSKGHQVVASSSLVPHNDPTLLFTNAGMNQFKDVFLGLDKRNYSRATTSQRCVRAGGKHNDLENVGYTARHHTFFEMLGNFSFGDYFKHDAIQFAWELLTSEKWFALPKERLWVTVYESDDEAYEIWEKEVGIPRERIIRIGDNKGAPYASDNFWQMGDTGPCGPCTEIFYDHGDHIWGGPPGSPEEDGDRYIEIWNIVFMQFNRQADGTMEPLPKPSVDTGMGLERIAAVLQHVNSNYDIDLFRTLIQAVAKVTGATDLSNKSLRVIADHIRSCAFLIADGVMPSNENRGYVLRRIIRRAVRHGNMLGAKETFFYKLVGPLIDVMGSAGEDLKRQQAQVEQVLKTEEEQFARTLERGLALLDEELAKLSGDTLDGETAFRLYDTYGFPVDLTADVCRERNIKVDEAGFEAAMEEQRRRAREASGFGADYNAMIRVDSASEFKGYDHLELNGKVTALFVDGKAVDAINAGQEAVVVLDQTPFYAESGGQVGDKGELKGANFSFVVEDTQKYGQAIGHIGKLAAGSLKVGDAVQADVDEARRARIRLNHSATHLMHAALRQVLGTHVSQKGSLVNDKVLRFDFSHNEAMKPEEIRAVEDLVNAQIRRNLPIETNIMDLEAAKAKGAMALFGEKYDERVRVLSMGDFSTELCGGTHASRTGDIGLFRIISESGTAAGVRRIEAVTGEGAITTVHADSDRLSEVAHLLKGDSNNLADKVRSVLERTRQLEKELQQLKEQAAAQESANLSSKAIDVNGVKLLVSELSGVEPKMLRTMVDDLKNQLGSTIIVLATVAEGKVSLIAGVSKDVTDRVKAGELIGMVAQQVGGKGGGRPDMAQAGGTDAAALPAALASVKGWVSAKLQ.

An N6-acetyllysine modification is found at Lys-74. The Zn(2+) site is built by His-564, His-568, Cys-666, and His-670.

The protein belongs to the class-II aminoacyl-tRNA synthetase family. Homotetramer. The cofactor is Zn(2+).

The protein localises to the cytoplasm. The catalysed reaction is tRNA(Ala) + L-alanine + ATP = L-alanyl-tRNA(Ala) + AMP + diphosphate. Its function is as follows. Catalyzes the attachment of alanine to tRNA(Ala) in a two-step reaction: alanine is first activated by ATP to form Ala-AMP and then transferred to the acceptor end of tRNA(Ala). Also edits incorrectly charged Ser-tRNA(Ala) and Gly-tRNA(Ala) via its editing domain. This chain is Alanine--tRNA ligase, found in Escherichia coli O157:H7.